We begin with the raw amino-acid sequence, 518 residues long: Sensor protein kinase HptS (518 aa).

2 consecutive transmembrane segments (helical) span residues 20–40 and 222–242; these read IFPV…IYIW and GITL…FGFI. A Histidine kinase domain is found at 297–513; it reads EQLIHSIEHT…LICYKIPLSR (217 aa). A Phosphohistidine; by autocatalysis modification is found at His325.

Post-translationally, autophosphorylated.

It is found in the cell membrane. The catalysed reaction is ATP + protein L-histidine = ADP + protein N-phospho-L-histidine.. Its function is as follows. Member of the two-component regulatory system HptS/HptR that regulates genes involved in hexose phosphate transport system in response to changes in extracellular phosphate sources. May act as a sensor protein kinase which is autophosphorylated at a histidine residue and transfers its phosphate group to the conserved aspartic acid residue in the regulatory domain of HptS. In turn, HptS antagonizes CcpA-dependent transcription of a subset of CcpA-regulated genes involved in antibiotic susceptibility. This Staphylococcus aureus (strain MRSA252) protein is Sensor protein kinase HptS (hptS).